The following is a 721-amino-acid chain: Protein mu-NS (721 aa).

An interaction with sigma-NS region spans residues 1–13 (MASFKGFSANTVP). The segment at 1–38 (MASFKGFSANTVPVSKAKRDISSLAATPGLRSQSFTPS) is RNA-binding. Positions 14–40 (VSKAKRDISSLAATPGLRSQSFTPSVD) are interaction with mu-2. An involved in the formation of factory-like inclusions region spans residues 471–721 (SNDVTDGIKL…IDFSVPTDEL (251 aa)). 2 coiled-coil regions span residues 522–559 (PLLSQLRELSSEVTRLQMELSRAQSLNAQLEADVKSAQ) and 628–684 (LMNG…ALNQ).

Belongs to the orthoreovirus mu-NS protein family. As to quaternary structure, interacts with mu-2. Interacts with sigma-NS; in viral factories. Interacts with the inner capsid proteins lambda-1 and sigma-2, and outer capsid protein lambda-2; in viral factories. Post-translationally, the N-terminus is blocked.

It localises to the host cytoplasm. Its function is as follows. Non-structural protein implicated with protein sigma-NS in forming the matrix of viral factories, which are large inclusions in the host cytoplasm where replication intermediates are assembled and viral RNA replication takes place. Together with mu-2, recruits the other core proteins to these factories. Binds RNA and recruits viral mRNAs to sites of viral replication. The polypeptide is Protein mu-NS (M3) (Reovirus type 3 (strain Dearing) (T3D)).